The following is a 123-amino-acid chain: Fluoride-specific ion channel FluC 1 (123 aa).

Helical transmembrane passes span 1-21 (MVDL…RYTL), 34-54 (PLAT…LYGF), 59-79 (VIWL…STYI), and 99-119 (LTSI…ANFF). G70 and T73 together coordinate Na(+).

Belongs to the fluoride channel Fluc/FEX (TC 1.A.43) family.

It is found in the cell membrane. The enzyme catalyses fluoride(in) = fluoride(out). Its activity is regulated as follows. Na(+) is not transported, but it plays an essential structural role and its presence is essential for fluoride channel function. Functionally, fluoride-specific ion channel. Important for reducing fluoride concentration in the cell, thus reducing its toxicity. The polypeptide is Fluoride-specific ion channel FluC 1 (Carboxydothermus hydrogenoformans (strain ATCC BAA-161 / DSM 6008 / Z-2901)).